A 376-amino-acid polypeptide reads, in one-letter code: RING-H2 finger protein ATL46 (376 aa).

A helical membrane pass occupies residues 45 to 65 (VLFVIVILAVLFFISGLLHLL). The RING-type; atypical zinc-finger motif lies at 143-185 (CAVCLCEFSEKDKLRLLPMCSHAFHLNCIDTWLQSNSTCPLCR). Basic and acidic residues-rich tracts occupy residues 296–305 (RLKPQDKESE) and 358–376 (DLPK…NDGR). Disordered regions lie at residues 296 to 320 (RLKP…KINT) and 341 to 376 (FSSD…NDGR).

The protein belongs to the RING-type zinc finger family. ATL subfamily.

It localises to the membrane. The enzyme catalyses S-ubiquitinyl-[E2 ubiquitin-conjugating enzyme]-L-cysteine + [acceptor protein]-L-lysine = [E2 ubiquitin-conjugating enzyme]-L-cysteine + N(6)-ubiquitinyl-[acceptor protein]-L-lysine.. It participates in protein modification; protein ubiquitination. The sequence is that of RING-H2 finger protein ATL46 (ATL46) from Arabidopsis thaliana (Mouse-ear cress).